The following is a 394-amino-acid chain: Phosphoglycerate kinase (394 aa).

Residues 21–23, Arg-36, 59–62, Arg-118, and Arg-151 contribute to the substrate site; these read DFN and HLGR. The residue at position 183 (Ser-183) is a Phosphoserine. Lys-201 is a binding site for ATP. Thr-299 carries the post-translational modification Phosphothreonine. ATP contacts are provided by residues Asn-316, Glu-323, and 350–353; that span reads GGDS.

Belongs to the phosphoglycerate kinase family. Monomer.

It is found in the cytoplasm. The enzyme catalyses (2R)-3-phosphoglycerate + ATP = (2R)-3-phospho-glyceroyl phosphate + ADP. It participates in carbohydrate degradation; glycolysis; pyruvate from D-glyceraldehyde 3-phosphate: step 2/5. The chain is Phosphoglycerate kinase from Geobacillus stearothermophilus (Bacillus stearothermophilus).